The chain runs to 284 residues: RNase adapter protein RapZ (284 aa).

8–15 (GRSGSGKS) contributes to the ATP binding site. 56–59 (DVRN) is a binding site for GTP. The RNA-binding stretch occupies residues 266–284 (RSRGKNAQSRHRTLEKSKS).

This sequence belongs to the RapZ-like family. RapZ subfamily. Homotrimer.

Its function is as follows. Modulates the synthesis of GlmS, by affecting the processing and stability of the regulatory small RNA GlmZ. When glucosamine-6-phosphate (GlcN6P) concentrations are high in the cell, RapZ binds GlmZ and targets it to cleavage by RNase E. Consequently, GlmZ is inactivated and unable to activate GlmS synthesis. Under low GlcN6P concentrations, RapZ is sequestered and inactivated by an other regulatory small RNA, GlmY, preventing GlmZ degradation and leading to synthesis of GlmS. The sequence is that of RNase adapter protein RapZ from Sodalis glossinidius (strain morsitans).